Reading from the N-terminus, the 450-residue chain is 3-phosphoshikimate 1-carboxyvinyltransferase (450 aa).

Residues Lys-28, Ser-29, and Arg-33 each coordinate 3-phosphoshikimate. Lys-28 provides a ligand contact to phosphoenolpyruvate. Phosphoenolpyruvate is bound by residues Gly-100 and Arg-128. Positions 173, 175, 326, and 353 each coordinate 3-phosphoshikimate. Gln-175 is a phosphoenolpyruvate binding site. Catalysis depends on Asp-326, which acts as the Proton acceptor. Arg-357 and Arg-402 together coordinate phosphoenolpyruvate.

Belongs to the EPSP synthase family. In terms of assembly, monomer.

Its subcellular location is the cytoplasm. It carries out the reaction 3-phosphoshikimate + phosphoenolpyruvate = 5-O-(1-carboxyvinyl)-3-phosphoshikimate + phosphate. It participates in metabolic intermediate biosynthesis; chorismate biosynthesis; chorismate from D-erythrose 4-phosphate and phosphoenolpyruvate: step 6/7. In terms of biological role, catalyzes the transfer of the enolpyruvyl moiety of phosphoenolpyruvate (PEP) to the 5-hydroxyl of shikimate-3-phosphate (S3P) to produce enolpyruvyl shikimate-3-phosphate and inorganic phosphate. In Brucella melitensis biotype 2 (strain ATCC 23457), this protein is 3-phosphoshikimate 1-carboxyvinyltransferase.